A 423-amino-acid chain; its full sequence is Citrate synthase-like protein clz17 (423 aa).

Active-site residues include His357 and Asp413.

The protein belongs to the citrate synthase family.

The protein operates within secondary metabolite biosynthesis. In terms of biological role, citrate synthase-like protein; part of the gene cluster that mediates the biosynthesis of squalestatin S1 (SQS1, also known as zaragozic acid A), a heavily oxidized fungal polyketide that offers potent cholesterol lowering activity by targeting squalene synthase (SS). SQS1 is composed of a 2,8-dioxobicyclic[3.2.1]octane-3,4,5-tricarboxyclic acid core that is connected to two lipophilic polyketide arms. These initial steps feature the priming of an unusual benzoic acid starter unit onto the highly reducing polyketide synthase clz14, followed by oxaloacetate extension and product release to generate a tricarboxylic acid containing product. The phenylalanine ammonia lyase (PAL) clz10 and the acyl-CoA ligase clz12 are involved in transforming phenylalanine into benzoyl-CoA. The citrate synthase-like protein clz17 is involved in connecting the C-alpha-carbons of the hexaketide chain and oxaloacetate to afford the tricarboxylic acid unit. The potential hydrolytic enzymes, clz11 and clz13, are in close proximity to pks2 and may participate in product release. On the other side, the tetraketide arm is synthesized by a the squalestatin tetraketide synthase clz2 and enzymatically esterified to the core in the last biosynthetic step, by the acetyltransferase clz6. The biosynthesis of the tetraketide must involve 3 rounds of chain extension. After the first and second rounds methyl-transfer occurs, and in all rounds of extension the ketoreductase and dehydratase are active. The enoyl reductase and C-MeT of clz2 are not active in the final round of extension. The acetyltransferase clz6 appears to have a broad substrate selectivity for its acyl CoA substrate, allowing the in vitro synthesis of novel squalestatins. The biosynthesis of SQS1 requires several oxidative steps likely performed by oxidoreductases clz3, clz15 and clz16. Finally, in support of the identification of the cluster as being responsible for SQS1 production, the cluster contains a gene encoding a putative squalene synthase (SS) clz20, suggesting a likely mechanism for self-resistance. This Cochliobolus lunatus (Filamentous fungus) protein is Citrate synthase-like protein clz17.